A 312-amino-acid chain; its full sequence is Aquaglyceroporin-2 (312 aa).

6 helical membrane passes run 78–98 (FLGN…SLLV), 104–124 (LGLT…SLGI), 151–171 (YIAA…GVFA), 203–223 (GIFY…LCVC), 239–259 (VAIG…SPLA), and 286–306 (YYFW…LFLY).

This sequence belongs to the MIP/aquaporin (TC 1.A.8) family.

It localises to the membrane. The enzyme catalyses glycerol(in) = glycerol(out). It carries out the reaction H2O(in) = H2O(out). It catalyses the reaction urea(in) = urea(out). Mediates water and glycerol transport across cell membranes. Permeable to urea. Permeable to methylamine/methylammonium. Permeable to dihydroxyacetone. The protein is Aquaglyceroporin-2 of Trypanosoma brucei brucei.